The following is a 192-amino-acid chain: uncharacterized protein (192 aa).

In terms of domain architecture, Nudix hydrolase spans 29–160 (HRQAAVLIPI…PLDIYRRGDS (132 aa)). Positions 67–89 (GAVDDTDASVIAAALREAEEEVA) match the Nudix box motif. Mg(2+)-binding residues include Glu-83 and Glu-87.

It belongs to the Nudix hydrolase family. PCD1 subfamily. Requires Mn(2+) as cofactor. Mg(2+) is required as a cofactor.

Probably mediates the hydrolysis of some nucleoside diphosphate derivatives. This is an uncharacterized protein from Shigella flexneri serotype 5b (strain 8401).